Here is a 477-residue protein sequence, read N- to C-terminus: PEP-dependent dihydroxyacetone kinase, phosphoryl donor subunit DhaM (477 aa).

The PTS EIIA type-4 domain maps to 1-135; that stretch reads MIGLIIVSHS…QALQAKQQQL (135 aa). Histidine 9 acts as the Tele-phosphohistidine intermediate in catalysis. The 88-residue stretch at 156-243 folds into the HPr domain; that stretch reads ALTTQWVVKN…QLAQHNFGDN (88 aa). The active-site Pros-phosphohistidine intermediate is histidine 170. Positions 269 to 477 are PTS EI-like, N-terminal part; sequence HAPNTELCIS…IETRSLIVAS (209 aa). Histidine 435 acts as the Tele-phosphohistidine intermediate in catalysis.

It belongs to the PEP-utilizing enzyme family. As to quaternary structure, homodimer. The dihydroxyacetone kinase complex is composed of a homodimer of DhaM, a homodimer of DhaK and the subunit DhaL.

The catalysed reaction is dihydroxyacetone + phosphoenolpyruvate = dihydroxyacetone phosphate + pyruvate. In terms of biological role, component of the dihydroxyacetone kinase complex, which is responsible for the phosphoenolpyruvate (PEP)-dependent phosphorylation of dihydroxyacetone. DhaM serves as the phosphoryl donor. Is phosphorylated by phosphoenolpyruvate in an EI- and HPr-dependent reaction, and a phosphorelay system on histidine residues finally leads to phosphoryl transfer to DhaL and dihydroxyacetone. This chain is PEP-dependent dihydroxyacetone kinase, phosphoryl donor subunit DhaM, found in Providencia stuartii (strain MRSN 2154).